A 305-amino-acid chain; its full sequence is Glutaminase (305 aa).

Residues S61, N113, E158, N165, Y189, Y241, and V259 each contribute to the substrate site.

It belongs to the glutaminase family. In terms of assembly, homotetramer.

The enzyme catalyses L-glutamine + H2O = L-glutamate + NH4(+). The chain is Glutaminase from Clostridium botulinum (strain Kyoto / Type A2).